The chain runs to 228 residues: PKHD-type hydroxylase Rmet_3078 (228 aa).

The 101-residue stretch at 80–180 (IVYPPMFNRY…RVGCFFWIQS (101 aa)) folds into the Fe2OG dioxygenase domain. 3 residues coordinate Fe cation: histidine 98, aspartate 100, and histidine 161. 2-oxoglutarate is bound at residue arginine 171.

Requires Fe(2+) as cofactor. It depends on L-ascorbate as a cofactor.

This Cupriavidus metallidurans (strain ATCC 43123 / DSM 2839 / NBRC 102507 / CH34) (Ralstonia metallidurans) protein is PKHD-type hydroxylase Rmet_3078.